Reading from the N-terminus, the 316-residue chain is ATP synthase gamma chain (316 aa).

This sequence belongs to the ATPase gamma chain family. In terms of assembly, F-type ATPases have 2 components, CF(1) - the catalytic core - and CF(0) - the membrane proton channel. CF(1) has five subunits: alpha(3), beta(3), gamma(1), delta(1), epsilon(1). CF(0) has three main subunits: a, b and c.

It is found in the cellular thylakoid membrane. Functionally, produces ATP from ADP in the presence of a proton gradient across the membrane. The gamma chain is believed to be important in regulating ATPase activity and the flow of protons through the CF(0) complex. The chain is ATP synthase gamma chain from Prochlorococcus marinus (strain SARG / CCMP1375 / SS120).